A 368-amino-acid chain; its full sequence is S-adenosylmethionine decarboxylase proenzyme (368 aa).

Active-site residues include glutamate 26 and glutamate 29. Serine 83 acts as the Schiff-base intermediate with substrate; via pyruvic acid in catalysis. Serine 83 is modified (pyruvic acid (Ser); by autocatalysis). Cysteine 97 serves as the catalytic Proton donor; for catalytic activity. Residues serine 246 and histidine 261 each act as proton acceptor; for processing activity in the active site.

The protein belongs to the eukaryotic AdoMetDC family. Heterotetramer of two alpha and two beta chains. Pyruvate serves as cofactor. In terms of processing, is synthesized initially as an inactive proenzyme. Formation of the active enzyme involves a self-maturation process in which the active site pyruvoyl group is generated from an internal serine residue via an autocatalytic post-translational modification. Two non-identical subunits are generated from the proenzyme in this reaction, and the pyruvate is formed at the N-terminus of the alpha chain, which is derived from the carboxyl end of the proenzyme. The post-translation cleavage follows an unusual pathway, termed non-hydrolytic serinolysis, in which the side chain hydroxyl group of the serine supplies its oxygen atom to form the C-terminus of the beta chain, while the remainder of the serine residue undergoes an oxidative deamination to produce ammonia and the pyruvoyl group blocking the N-terminus of the alpha chain.

It carries out the reaction S-adenosyl-L-methionine + H(+) = S-adenosyl 3-(methylsulfanyl)propylamine + CO2. Its pathway is amine and polyamine biosynthesis; S-adenosylmethioninamine biosynthesis; S-adenosylmethioninamine from S-adenosyl-L-methionine: step 1/1. Essential for biosynthesis of the polyamines spermidine and spermine. Polyamines are essential for cell proliferation and are implicated in cellular processes, ranging from DNA replication to apoptosis. The polypeptide is S-adenosylmethionine decarboxylase proenzyme (Caenorhabditis elegans).